Here is a 205-residue protein sequence, read N- to C-terminus: Ribosomal RNA large subunit methyltransferase E (205 aa).

S-adenosyl-L-methionine contacts are provided by glycine 60, tryptophan 62, aspartate 80, aspartate 96, and aspartate 121. Lysine 161 acts as the Proton acceptor in catalysis.

The protein belongs to the class I-like SAM-binding methyltransferase superfamily. RNA methyltransferase RlmE family.

The protein resides in the cytoplasm. It carries out the reaction uridine(2552) in 23S rRNA + S-adenosyl-L-methionine = 2'-O-methyluridine(2552) in 23S rRNA + S-adenosyl-L-homocysteine + H(+). In terms of biological role, specifically methylates the uridine in position 2552 of 23S rRNA at the 2'-O position of the ribose in the fully assembled 50S ribosomal subunit. The sequence is that of Ribosomal RNA large subunit methyltransferase E from Azoarcus sp. (strain BH72).